The chain runs to 286 residues: tRNA (guanine-N(7)-)-methyltransferase (286 aa).

S-adenosyl-L-methionine contacts are provided by Glu-91, Glu-116, Asn-143, and Asp-165. The active site involves Asp-165. Substrate contacts are provided by residues Lys-169, Asp-201, and Thr-262–Glu-265.

Belongs to the class I-like SAM-binding methyltransferase superfamily. TrmB family.

The catalysed reaction is guanosine(46) in tRNA + S-adenosyl-L-methionine = N(7)-methylguanosine(46) in tRNA + S-adenosyl-L-homocysteine. The protein operates within tRNA modification; N(7)-methylguanine-tRNA biosynthesis. In terms of biological role, catalyzes the formation of N(7)-methylguanine at position 46 (m7G46) in tRNA. In Bifidobacterium longum subsp. infantis (strain ATCC 15697 / DSM 20088 / JCM 1222 / NCTC 11817 / S12), this protein is tRNA (guanine-N(7)-)-methyltransferase.